A 418-amino-acid chain; its full sequence is Tyrosine--tRNA ligase (418 aa).

Tyrosine 34 is a binding site for L-tyrosine. The 'HIGH' region signature appears at 39-48; it reads PTADSLHLGH. L-tyrosine-binding residues include tyrosine 169 and glutamine 173. Residues 229–233 carry the 'KMSKS' region motif; sequence KFGKS. Lysine 232 provides a ligand contact to ATP. Residues 352 to 418 form the S4 RNA-binding domain; that stretch reads LNLVDMLVTA…GKKKYAVLTY (67 aa).

It belongs to the class-I aminoacyl-tRNA synthetase family. TyrS type 1 subfamily. In terms of assembly, homodimer.

It is found in the cytoplasm. The enzyme catalyses tRNA(Tyr) + L-tyrosine + ATP = L-tyrosyl-tRNA(Tyr) + AMP + diphosphate + H(+). Its function is as follows. Catalyzes the attachment of tyrosine to tRNA(Tyr) in a two-step reaction: tyrosine is first activated by ATP to form Tyr-AMP and then transferred to the acceptor end of tRNA(Tyr). The sequence is that of Tyrosine--tRNA ligase from Streptococcus pyogenes serotype M6 (strain ATCC BAA-946 / MGAS10394).